The sequence spans 165 residues: MARNAYFILLSCLIVLSPSQGQEAEEDLPSARISCPEGSNAYSSYCYYFTEDRLTWADADLFCQNMNSGYLVSVLSQAEGNFVASLIKESGTTDANVWTGLHDPKRNRRWHWSSGSLFLYKSWATGSPNSSNRGYCVSLTSNTGYKKWKDDNCDAQYSFVCKFKG.

An N-terminal signal peptide occupies residues 1 to 21; the sequence is MARNAYFILLSCLIVLSPSQG. Gln22 carries the post-translational modification Pyrrolidone carboxylic acid. Positions 33–163 constitute a C-type lectin domain; the sequence is ISCPEGSNAY…DAQYSFVCKF (131 aa). Cystine bridges form between Cys35–Cys46, Cys63–Cys161, and Cys136–Cys153. N-linked (GlcNAc...) asparagine glycosylation occurs at Asn129.

Expressed only in regenerating islets and normal exocrine pancreas, but not in normal pancreatic islets. Expressed strongly in pancreas, moderately in gall bladder, and weakly in liver.

It is found in the secreted. Its function is as follows. Might act as an inhibitor of spontaneous calcium carbonate precipitation. This Mus musculus (Mouse) protein is Lithostathine-1 (Reg1).